A 189-amino-acid polypeptide reads, in one-letter code: Ornithine decarboxylase antizyme 2 (189 aa).

Phosphoserine is present on serine 186.

This sequence belongs to the ODC antizyme family. In terms of assembly, interacts with ODC1 and thereby sterically blocks ODC homodimerization. Interacts with AZIN2; this interaction disrupts the interaction between the antizyme and ODC1.

Its subcellular location is the nucleus. Functionally, ornithine decarboxylase (ODC) antizyme protein that negatively regulates ODC activity and intracellular polyamine biosynthesis and uptake in response to increased intracellular polyamine levels. Binds to ODC monomers, inhibiting the assembly of the functional ODC homodimers. Does not target the ODC monomers for degradation, which allows a protein synthesis-independent restoration of ODC activity. Involved in the translocation of AZIN2 from ER-Golgi intermediate compartment (ERGIC) to the cytosol. The sequence is that of Ornithine decarboxylase antizyme 2 (OAZ2) from Homo sapiens (Human).